A 704-amino-acid chain; its full sequence is Elongation factor G (704 aa).

Residues 10–290 (TKVRNIGIMA…AVVDYLPSPL (281 aa)) form the tr-type G domain. Residues 19–26 (AHIDAGKT), 83–87 (DTPGH), and 137–140 (NKMD) contribute to the GTP site.

The protein belongs to the TRAFAC class translation factor GTPase superfamily. Classic translation factor GTPase family. EF-G/EF-2 subfamily.

It is found in the cytoplasm. Its function is as follows. Catalyzes the GTP-dependent ribosomal translocation step during translation elongation. During this step, the ribosome changes from the pre-translocational (PRE) to the post-translocational (POST) state as the newly formed A-site-bound peptidyl-tRNA and P-site-bound deacylated tRNA move to the P and E sites, respectively. Catalyzes the coordinated movement of the two tRNA molecules, the mRNA and conformational changes in the ribosome. This Beutenbergia cavernae (strain ATCC BAA-8 / DSM 12333 / CCUG 43141 / JCM 11478 / NBRC 16432 / NCIMB 13614 / HKI 0122) protein is Elongation factor G.